We begin with the raw amino-acid sequence, 95 residues long: Aspartyl/glutamyl-tRNA(Asn/Gln) amidotransferase subunit C (95 aa).

The protein belongs to the GatC family. In terms of assembly, heterotrimer of A, B and C subunits.

It catalyses the reaction L-glutamyl-tRNA(Gln) + L-glutamine + ATP + H2O = L-glutaminyl-tRNA(Gln) + L-glutamate + ADP + phosphate + H(+). It carries out the reaction L-aspartyl-tRNA(Asn) + L-glutamine + ATP + H2O = L-asparaginyl-tRNA(Asn) + L-glutamate + ADP + phosphate + 2 H(+). Functionally, allows the formation of correctly charged Asn-tRNA(Asn) or Gln-tRNA(Gln) through the transamidation of misacylated Asp-tRNA(Asn) or Glu-tRNA(Gln) in organisms which lack either or both of asparaginyl-tRNA or glutaminyl-tRNA synthetases. The reaction takes place in the presence of glutamine and ATP through an activated phospho-Asp-tRNA(Asn) or phospho-Glu-tRNA(Gln). The protein is Aspartyl/glutamyl-tRNA(Asn/Gln) amidotransferase subunit C of Prochlorococcus marinus (strain NATL2A).